We begin with the raw amino-acid sequence, 569 residues long: Laccase-13 (569 aa).

The N-terminal stretch at 1–21 (MEQLRPFFLLLAIFVASLVNA) is a signal peptide. 2 consecutive Plastocyanin-like domains span residues 29 to 145 (VIQE…PPLS) and 157 to 308 (REIT…YKDA). Residue asparagine 75 is glycosylated (N-linked (GlcNAc...) asparagine). 4 residues coordinate Cu cation: histidine 79, histidine 81, histidine 124, and histidine 126. N-linked (GlcNAc...) asparagine glycosylation is found at asparagine 186, asparagine 296, asparagine 330, asparagine 381, asparagine 391, and asparagine 432. Positions 418–553 (DFPPTPPVTF…AMVFLVENGE (136 aa)) constitute a Plastocyanin-like 3 domain. Histidine 470, histidine 473, histidine 475, histidine 532, cysteine 533, histidine 534, and histidine 538 together coordinate Cu cation.

The protein belongs to the multicopper oxidase family. The cofactor is Cu cation. In terms of tissue distribution, mostly expressed in roots. Also detected in leaves, stems and flowers but not in siliques.

It localises to the secreted. Its subcellular location is the extracellular space. The protein resides in the apoplast. The enzyme catalyses 4 hydroquinone + O2 = 4 benzosemiquinone + 2 H2O. Its function is as follows. Lignin degradation and detoxification of lignin-derived products. In Arabidopsis thaliana (Mouse-ear cress), this protein is Laccase-13 (LAC13).